The chain runs to 403 residues: Keratin, type I cytoskeletal 19 (403 aa).

A head region spans residues 1–82; that stretch reads MTSYSYRQTS…AVSDGLLSGN (82 aa). Residue R7 is modified to Omega-N-methylarginine. 2 positions are modified to phosphoserine: S14 and S22. R24 carries the post-translational modification Asymmetric dimethylarginine; alternate. R24 carries the post-translational modification Omega-N-methylarginine; alternate. Residue S27 is modified to Phosphoserine. An Omega-N-methylarginine modification is found at R32. Phosphoserine occurs at positions 35 and 40. Omega-N-methylarginine occurs at positions 43 and 51. At S57 the chain carries Phosphoserine. An Omega-N-methylarginine modification is found at R64. Phosphoserine occurs at positions 67 and 75. A coil 1A region spans residues 83 to 118; it reads EKITMQNLNDRLASYLDKVRALEQANGELEVKIRDW. The IF rod domain occupies 83–394; sequence EKITMQNLND…SLLEGQEAHY (312 aa). Residues 119–136 form a linker 1 region; that stretch reads YQKQGPGPSRDYNHYFKT. A coil 1B region spans residues 137–228; the sequence is IEDLRDKILG…KNHEEEITAL (92 aa). The segment at 229–251 is linker 12; it reads RSQVGGQVSVEVDSTPGVDLAKI. The interval 247 to 393 is necessary for interaction with PNN; the sequence is DLAKILSEMR…RSLLEGQEAH (147 aa). A coil 2 region spans residues 252–390; that stretch reads LSEMRSQYEI…ATYRSLLEGQ (139 aa). T326 carries the phosphothreonine modification. Residues 391–403 form a rod-like helical tail region; it reads EAHYNNLPTPKAI. Phosphotyrosine is present on Y394.

Belongs to the intermediate filament family. In terms of assembly, heterotetramer of two type I and two type II keratins. Interacts with PNN and the actin-binding domain of DMD.

Its function is as follows. Involved in the organization of myofibers. Together with KRT8, helps to link the contractile apparatus to dystrophin at the costameres of striated muscle. In Mus musculus (Mouse), this protein is Keratin, type I cytoskeletal 19 (Krt19).